The following is a 280-amino-acid chain: Tobamovirus multiplication protein 2A (280 aa).

The Cytoplasmic segment spans residues 1–13 (MACRGCLECLLKL). The helical transmembrane segment at 14–34 (LNFLLAVAGLGMIGYGIYLFV) threads the bilayer. Residues 35 to 78 (EYKRVTDNSVTFDLTNGDQSYVSFGRPILMAVSLSSNIFDNLPK) are Extracellular-facing. Residues 79 to 99 (AWFIYLFIGIGVALFVISCCG) traverse the membrane as a helical segment. At 100–113 (CVGTCSRSVCCLSC) the chain is on the cytoplasmic side. Residues 114 to 134 (YSLLLILLILVELGFAAFIFF) form a helical membrane-spanning segment. Topologically, residues 135 to 162 (DNSWRDELPSDRTGNFDTIYNFLRENWK) are extracellular. Residues 163–183 (IVRWVALGAVVFEALLFLLAL) traverse the membrane as a helical segment. The Cytoplasmic segment spans residues 184–280 (MVRAANTPAE…NEEKGRCTIM (97 aa)). Phosphoserine is present on residues S196 and S233. Residues 258–280 (SESHRFQQMPAQPNEEKGRCTIM) form a disordered region. Positions 271–280 (NEEKGRCTIM) are enriched in basic and acidic residues.

Belongs to the tetraspanin (TM4SF) family. In terms of assembly, homodimer. Constituent of tobamovirus replication complex. Interacts with TOM1. In terms of tissue distribution, expressed in rosette leaves.

The protein localises to the vacuole membrane. Necessary for the efficient intracellular multiplication of tobamoviruses, being a component of the replication complex. This is Tobamovirus multiplication protein 2A (TOM2A) from Arabidopsis thaliana (Mouse-ear cress).